The following is a 387-amino-acid chain: Phosphoglycerate kinase (387 aa).

Substrate-binding positions include 21–23 (DLN), R36, 59–62 (HLGR), R113, and R146. Residues K197, E314, and 340–343 (GGDT) each bind ATP.

Belongs to the phosphoglycerate kinase family. As to quaternary structure, monomer.

Its subcellular location is the cytoplasm. It catalyses the reaction (2R)-3-phosphoglycerate + ATP = (2R)-3-phospho-glyceroyl phosphate + ADP. The protein operates within carbohydrate degradation; glycolysis; pyruvate from D-glyceraldehyde 3-phosphate: step 2/5. The chain is Phosphoglycerate kinase from Yersinia enterocolitica serotype O:8 / biotype 1B (strain NCTC 13174 / 8081).